We begin with the raw amino-acid sequence, 107 residues long: Putative antitoxin VapB5 (107 aa).

2 helical membrane passes run glycine 3 to alanine 23 and leucine 65 to tyrosine 85.

The protein resides in the cell membrane. Its function is as follows. Possibly the antitoxin component of a type II toxin-antitoxin (TA) system. Its cognate toxin is VapC5 (Potential). In Methanocaldococcus jannaschii (strain ATCC 43067 / DSM 2661 / JAL-1 / JCM 10045 / NBRC 100440) (Methanococcus jannaschii), this protein is Putative antitoxin VapB5 (vapB5).